Here is a 413-residue protein sequence, read N- to C-terminus: DNA primase DnaG (413 aa).

The region spanning 168-246 is the Toprim domain; that stretch reads PNLIIVEGRA…KIDYVARAPV (79 aa). Mg(2+)-binding residues include Glu-174, Asp-219, and Asp-221.

Belongs to the archaeal DnaG primase family. In terms of assembly, forms a ternary complex with MCM helicase and DNA. Component of the archaeal exosome complex. Requires Mg(2+) as cofactor.

The enzyme catalyses ssDNA + n NTP = ssDNA/pppN(pN)n-1 hybrid + (n-1) diphosphate.. Functionally, RNA polymerase that catalyzes the synthesis of short RNA molecules used as primers for DNA polymerase during DNA replication. Also part of the exosome, which is a complex involved in RNA degradation. Acts as a poly(A)-binding protein that enhances the interaction between heteromeric, adenine-rich transcripts and the exosome. This chain is DNA primase DnaG, found in Metallosphaera sedula (strain ATCC 51363 / DSM 5348 / JCM 9185 / NBRC 15509 / TH2).